We begin with the raw amino-acid sequence, 295 residues long: sn-glycerol-3-phosphate transport system permease protein UgpA (295 aa).

Residues 1-11 (MSSSRPVFRSR) are Cytoplasmic-facing. Residues 12–32 (WLPYLLVAPQLIITVIFFIWP) traverse the membrane as a helical segment. At 33–80 (AGEALWYSLQSVDPFGFSSQFVGLDNFVTLFHDSYYLDSFWTTIKFST) the chain is on the periplasmic side. In terms of domain architecture, ABC transmembrane type-1 spans 76-284 (IKFSTFVTVS…FLVIVLTVVQ (209 aa)). Residues 81-101 (FVTVSGLLVSLFFAALVEYIV) form a helical membrane-spanning segment. Residues 102 to 109 (RGSRFYQT) are Cytoplasmic-facing. Residues 110–130 (LMLLPYAVAPAVAAVLWIFLF) traverse the membrane as a helical segment. The Periplasmic segment spans residues 131–156 (NPGRGLITHFLAEFGYDWNHAQNSGQ). The helical transmembrane segment at 157 to 177 (AMFLVVFASVWKQISYNFLFF) threads the bilayer. Residues 178-207 (YAALQSIPRSLIEAAAIDGAGPIRRFFKIA) lie on the Cytoplasmic side of the membrane. The helical transmembrane segment at 208–228 (LPLIAPVSFFLLVVNLVYAFF) threads the bilayer. Residues 229–262 (DTFPVIDAATSGGPVQATTTLIYKIYREGFTGLD) are Periplasmic-facing. The chain crosses the membrane as a helical span at residues 263–283 (LASSAAQSMVLMFLVIVLTVV). At 284-295 (QFRYVESKVRYQ) the chain is on the cytoplasmic side.

The protein belongs to the binding-protein-dependent transport system permease family. UgpAE subfamily. In terms of assembly, the complex is composed of two ATP-binding proteins (UgpC), two transmembrane proteins (UgpA and UgpE) and a solute-binding protein (UgpB).

The protein resides in the cell inner membrane. Its function is as follows. Part of the ABC transporter complex UgpBAEC involved in sn-glycerol-3-phosphate (G3P) import. Probably responsible for the translocation of the substrate across the membrane. This chain is sn-glycerol-3-phosphate transport system permease protein UgpA (ugpA), found in Shigella flexneri.